Reading from the N-terminus, the 602-residue chain is Phosphoenolpyruvate carboxykinase [GTP] (602 aa).

Substrate contacts are provided by residues arginine 89 and 211 to 213 (YAG). Mn(2+)-binding residues include lysine 220 and histidine 239. Serine 260 serves as a coordination point for substrate. Position 261–266 (261–266 (GSGKTS)) interacts with GTP. Serine 262 is a catalytic residue. Aspartate 277 is a binding site for Mn(2+). A substrate-binding site is contributed by 367-369 (NAR). GTP contacts are provided by arginine 369 and arginine 400.

The protein belongs to the phosphoenolpyruvate carboxykinase [GTP] family. The cofactor is Mn(2+).

Its subcellular location is the cytoplasm. The catalysed reaction is oxaloacetate + GTP = phosphoenolpyruvate + GDP + CO2. It participates in carbohydrate biosynthesis; gluconeogenesis. Catalyzes the conversion of oxaloacetate (OAA) to phosphoenolpyruvate (PEP), the rate-limiting step in the metabolic pathway that produces glucose from lactate and other precursors derived from the citric acid cycle. The sequence is that of Phosphoenolpyruvate carboxykinase [GTP] from Sulfurisphaera tokodaii (strain DSM 16993 / JCM 10545 / NBRC 100140 / 7) (Sulfolobus tokodaii).